The sequence spans 232 residues: Thiamine import ATP-binding protein ThiQ (232 aa).

The ABC transporter domain maps to leucine 2–isoleucine 230. Residue glycine 32–serine 39 coordinates ATP.

This sequence belongs to the ABC transporter superfamily. Thiamine importer (TC 3.A.1.19.1) family. The complex is composed of two ATP-binding proteins (ThiQ), two transmembrane proteins (ThiP) and a solute-binding protein (ThiB).

The protein localises to the cell inner membrane. The catalysed reaction is thiamine(out) + ATP + H2O = thiamine(in) + ADP + phosphate + H(+). Functionally, part of the ABC transporter complex ThiBPQ involved in thiamine import. Responsible for energy coupling to the transport system. The sequence is that of Thiamine import ATP-binding protein ThiQ from Shigella sonnei (strain Ss046).